Consider the following 364-residue polypeptide: Probable endopolygalacturonase B (364 aa).

The N-terminal stretch at 1-20 is a signal peptide; sequence MHFFQSSLVAATMGAALVAA. The propeptide occupies 21–29; the sequence is APAADLETR. Residues Cys32 and Cys47 are joined by a disulfide bond. N-linked (GlcNAc...) asparagine glycans are attached at residues Asn138 and Asn141. PbH1 repeat units follow at residues 159 to 188, 189 to 210, 211 to 231, 240 to 261, 269 to 291, and 303 to 324; these read SDHLTIKDVLLDNSAGTKLGHNTDAFDVGS, STYITIDGATVYNQDDCLAVNS, GEHITFTNGYCNGGHGLSIGS, VNDVTISNSQVINSQNGARIKT, VTGVKFQDISLKGITKYGIVVQQ, and TNGVKVSDITFEKVTGTVTSSA. Asp203 serves as the catalytic Proton donor. Cys205 and Cys221 form a disulfide bridge. The active site involves His225. Cys331 and Cys336 are oxidised to a cystine. The N-linked (GlcNAc...) asparagine glycan is linked to Asn338. Cys355 and Cys364 are oxidised to a cystine.

This sequence belongs to the glycosyl hydrolase 28 family.

The protein localises to the secreted. It catalyses the reaction (1,4-alpha-D-galacturonosyl)n+m + H2O = (1,4-alpha-D-galacturonosyl)n + (1,4-alpha-D-galacturonosyl)m.. Involved in maceration and soft-rotting of plant tissue. Hydrolyzes the 1,4-alpha glycosidic bonds of de-esterified pectate in the smooth region of the plant cell wall. The sequence is that of Probable endopolygalacturonase B (pgaB) from Aspergillus fumigatus (strain ATCC MYA-4609 / CBS 101355 / FGSC A1100 / Af293) (Neosartorya fumigata).